The following is a 141-amino-acid chain: Large ribosomal subunit protein uL16 (141 aa).

Positions 1-20 (MLMPKRTKYRKQMKGRNRGK) are disordered.

This sequence belongs to the universal ribosomal protein uL16 family. As to quaternary structure, part of the 50S ribosomal subunit.

Binds 23S rRNA and is also seen to make contacts with the A and possibly P site tRNAs. This Helicobacter hepaticus (strain ATCC 51449 / 3B1) protein is Large ribosomal subunit protein uL16.